Consider the following 267-residue polypeptide: Large ribosomal subunit protein uL2c (267 aa).

This sequence belongs to the universal ribosomal protein uL2 family. In terms of assembly, part of the 50S ribosomal subunit.

Its subcellular location is the plastid. The protein resides in the apicoplast. The sequence is that of Large ribosomal subunit protein uL2c (rpl2) from Toxoplasma gondii.